The sequence spans 415 residues: Serine hydroxymethyltransferase (415 aa).

Residues L117 and 121 to 123 (GHL) contribute to the (6S)-5,6,7,8-tetrahydrofolate site. K226 carries the N6-(pyridoxal phosphate)lysine modification. Position 349–351 (349–351 (SPF)) interacts with (6S)-5,6,7,8-tetrahydrofolate.

Belongs to the SHMT family. In terms of assembly, homodimer. It depends on pyridoxal 5'-phosphate as a cofactor.

The protein localises to the cytoplasm. The enzyme catalyses (6R)-5,10-methylene-5,6,7,8-tetrahydrofolate + glycine + H2O = (6S)-5,6,7,8-tetrahydrofolate + L-serine. It functions in the pathway one-carbon metabolism; tetrahydrofolate interconversion. Its pathway is amino-acid biosynthesis; glycine biosynthesis; glycine from L-serine: step 1/1. Its function is as follows. Catalyzes the reversible interconversion of serine and glycine with tetrahydrofolate (THF) serving as the one-carbon carrier. This reaction serves as the major source of one-carbon groups required for the biosynthesis of purines, thymidylate, methionine, and other important biomolecules. Also exhibits THF-independent aldolase activity toward beta-hydroxyamino acids, producing glycine and aldehydes, via a retro-aldol mechanism. The sequence is that of Serine hydroxymethyltransferase from Geobacter sp. (strain M21).